The following is a 151-amino-acid chain: Deoxyuridine 5'-triphosphate nucleotidohydrolase (151 aa).

Substrate contacts are provided by residues 70-72 (RSG), Asn83, 87-89 (LID), and Met97.

This sequence belongs to the dUTPase family. It depends on Mg(2+) as a cofactor.

The catalysed reaction is dUTP + H2O = dUMP + diphosphate + H(+). The protein operates within pyrimidine metabolism; dUMP biosynthesis; dUMP from dCTP (dUTP route): step 2/2. Its function is as follows. This enzyme is involved in nucleotide metabolism: it produces dUMP, the immediate precursor of thymidine nucleotides and it decreases the intracellular concentration of dUTP so that uracil cannot be incorporated into DNA. The polypeptide is Deoxyuridine 5'-triphosphate nucleotidohydrolase (Pseudomonas putida (strain ATCC 700007 / DSM 6899 / JCM 31910 / BCRC 17059 / LMG 24140 / F1)).